We begin with the raw amino-acid sequence, 269 residues long: 3-methyl-2-oxobutanoate hydroxymethyltransferase (269 aa).

Asp-50 and Asp-89 together coordinate Mg(2+). 3-methyl-2-oxobutanoate contacts are provided by residues 50 to 51 (DS), Asp-89, and Lys-118. Glu-120 serves as a coordination point for Mg(2+). Glu-187 serves as the catalytic Proton acceptor.

The protein belongs to the PanB family. As to quaternary structure, homodecamer; pentamer of dimers. It depends on Mg(2+) as a cofactor.

Its subcellular location is the cytoplasm. It carries out the reaction 3-methyl-2-oxobutanoate + (6R)-5,10-methylene-5,6,7,8-tetrahydrofolate + H2O = 2-dehydropantoate + (6S)-5,6,7,8-tetrahydrofolate. The protein operates within cofactor biosynthesis; (R)-pantothenate biosynthesis; (R)-pantoate from 3-methyl-2-oxobutanoate: step 1/2. Catalyzes the reversible reaction in which hydroxymethyl group from 5,10-methylenetetrahydrofolate is transferred onto alpha-ketoisovalerate to form ketopantoate. The chain is 3-methyl-2-oxobutanoate hydroxymethyltransferase from Nitrosomonas europaea (strain ATCC 19718 / CIP 103999 / KCTC 2705 / NBRC 14298).